The following is a 372-amino-acid chain: Putative glutamate--cysteine ligase 2 (372 aa).

It belongs to the glutamate--cysteine ligase type 2 family. YbdK subfamily. As to quaternary structure, homodimer.

The catalysed reaction is L-cysteine + L-glutamate + ATP = gamma-L-glutamyl-L-cysteine + ADP + phosphate + H(+). ATP-dependent carboxylate-amine ligase which exhibits weak glutamate--cysteine ligase activity. The protein is Putative glutamate--cysteine ligase 2 (ybdK) of Escherichia coli O127:H6 (strain E2348/69 / EPEC).